We begin with the raw amino-acid sequence, 589 residues long: V-type ATP synthase alpha chain (589 aa).

Residue 239-246 (GPFGAGKT) participates in ATP binding.

This sequence belongs to the ATPase alpha/beta chains family.

It catalyses the reaction ATP + H2O + 4 H(+)(in) = ADP + phosphate + 5 H(+)(out). Functionally, produces ATP from ADP in the presence of a proton gradient across the membrane. The V-type alpha chain is a catalytic subunit. The chain is V-type ATP synthase alpha chain from Treponema denticola (strain ATCC 35405 / DSM 14222 / CIP 103919 / JCM 8153 / KCTC 15104).